Here is a 665-residue protein sequence, read N- to C-terminus: Beta-galactosidase LacZ (665 aa).

R110 lines the substrate pocket. A Zn(2+)-binding site is contributed by C114. N148 contacts substrate. E149 acts as the Proton donor in catalysis. Zn(2+)-binding residues include C157, C159, and C162. The active-site Nucleophile is E303. Residues W311 and 351-354 (EKFH) each bind substrate.

The protein belongs to the glycosyl hydrolase 42 family.

The enzyme catalyses Hydrolysis of terminal non-reducing beta-D-galactose residues in beta-D-galactosides.. This is Beta-galactosidase LacZ from Heyndrickxia coagulans (Weizmannia coagulans).